A 931-amino-acid chain; its full sequence is Phosphoenolpyruvate carboxylase (931 aa).

Catalysis depends on residues H158 and K593.

This sequence belongs to the PEPCase type 1 family. Requires Mg(2+) as cofactor.

The enzyme catalyses oxaloacetate + phosphate = phosphoenolpyruvate + hydrogencarbonate. Functionally, forms oxaloacetate, a four-carbon dicarboxylic acid source for the tricarboxylic acid cycle. This chain is Phosphoenolpyruvate carboxylase, found in Azorhizobium caulinodans (strain ATCC 43989 / DSM 5975 / JCM 20966 / LMG 6465 / NBRC 14845 / NCIMB 13405 / ORS 571).